Here is a 274-residue protein sequence, read N- to C-terminus: Large ribosomal subunit protein uL2 (274 aa).

The disordered stretch occupies residues 221–254; the sequence is RGTAMNPADHPHGGGEGRTFGKHPVSPWGLPTKG.

Belongs to the universal ribosomal protein uL2 family. In terms of assembly, part of the 50S ribosomal subunit. Forms a bridge to the 30S subunit in the 70S ribosome.

Its function is as follows. One of the primary rRNA binding proteins. Required for association of the 30S and 50S subunits to form the 70S ribosome, for tRNA binding and peptide bond formation. It has been suggested to have peptidyltransferase activity; this is somewhat controversial. Makes several contacts with the 16S rRNA in the 70S ribosome. The protein is Large ribosomal subunit protein uL2 of Sulfurihydrogenibium sp. (strain YO3AOP1).